We begin with the raw amino-acid sequence, 250 residues long: Beta-lactamase HcpA (250 aa).

The first 25 residues, 1–25 (MLGSVKKTLFGVLCLGALCLRGLMA), serve as a signal peptide directing secretion. TPR repeat units follow at residues 29–62 (AKEL…KEGF), 67–98 (LGAF…NDGY), 100–133 (CRLL…LNHA), 134–169 (EGCT…LKDS), and 170–202 (PGCI…KDGR). 6 cysteine pairs are disulfide-bonded: Cys-56–Cys-64, Cys-92–Cys-100, Cys-128–Cys-136, Cys-164–Cys-172, Cys-196–Cys-204, and Cys-232–Cys-240.

It belongs to the hcp beta-lactamase family.

It localises to the secreted. The catalysed reaction is a beta-lactam + H2O = a substituted beta-amino acid. With respect to regulation, inhibited by cloxacillin and oxacillin but not by ACA derivatives or metal chelators. Slowly hydrolyzes 6-aminopenicillinic acid and 7-aminocephalosporanic acid (ACA) derivatives. May be involved in the synthesis of the cell wall peptidoglycan. The polypeptide is Beta-lactamase HcpA (hcpA) (Helicobacter pylori (strain J99 / ATCC 700824) (Campylobacter pylori J99)).